The sequence spans 372 residues: uncharacterized protein (372 aa).

4–18 contacts FAD; the sequence is YIIVGAGILGASTAY.

This sequence belongs to the DadA oxidoreductase family. Requires FAD as cofactor.

This is an uncharacterized protein from Bacillus subtilis (strain 168).